The sequence spans 481 residues: Tryptophan--tRNA ligase, cytoplasmic (481 aa).

One can recognise a WHEP-TRS domain in the interval 12 to 68; that stretch reads SPLELFNSIAAQGELVRSLKAGNAPKDEIESAVKMLLSLKMNYKTAMGEEYKAGCPP. The interval 65-85 is disordered; it reads GCPPGNSTAGSNGDPDATKAS. Residue Lys158 is modified to N6-succinyllysine. Positions 168 to 177 match the 'HIGH' region motif; that stretch reads PSSEAMHLGH. The short motif at 353–357 is the 'KMSKS' region element; it reads KMSAS. The residue at position 355 (Ser355) is a Phosphoserine.

Belongs to the class-I aminoacyl-tRNA synthetase family. In terms of assembly, homodimer. Interacts with oxidized form of GAPDH. In terms of processing, proteolytic cleavage generates 2 forms; T1-TrpRS and T2-TrpRS.

The protein localises to the cytoplasm. It carries out the reaction tRNA(Trp) + L-tryptophan + ATP = L-tryptophyl-tRNA(Trp) + AMP + diphosphate + H(+). Catalyzes the attachment of tryptophan to tRNA(Trp) in a two-step reaction: tryptophan is first activated by ATP to form Trp-AMP and then transferred to the acceptor end of the tRNA(Trp). Could also possess an angiostatic activity. This Rattus norvegicus (Rat) protein is Tryptophan--tRNA ligase, cytoplasmic.